Consider the following 89-residue polypeptide: Small ribosomal subunit protein bS20 (89 aa).

The segment covering 1-10 (MKNRSAIKRH) has biased composition (basic residues). A disordered region spans residues 1–30 (MKNRSAIKRHNQSEVRRMRNRSAKSEVRTT). Basic and acidic residues predominate over residues 11-30 (NQSEVRRMRNRSAKSEVRTT).

This sequence belongs to the bacterial ribosomal protein bS20 family.

Binds directly to 16S ribosomal RNA. The polypeptide is Small ribosomal subunit protein bS20 (Treponema denticola (strain ATCC 35405 / DSM 14222 / CIP 103919 / JCM 8153 / KCTC 15104)).